An 865-amino-acid polypeptide reads, in one-letter code: Leucine--tRNA ligase (865 aa).

Residues 41–51 (PYPSGRIHMGH) carry the 'HIGH' region motif. The 'KMSKS' region motif lies at 614–618 (KMSKS). Lys-617 lines the ATP pocket.

The protein belongs to the class-I aminoacyl-tRNA synthetase family.

It localises to the cytoplasm. It carries out the reaction tRNA(Leu) + L-leucine + ATP = L-leucyl-tRNA(Leu) + AMP + diphosphate. This is Leucine--tRNA ligase from Rhodospirillum centenum (strain ATCC 51521 / SW).